We begin with the raw amino-acid sequence, 66 residues long: Clarkitoxin-I-Mdum (66 aa).

Cystine bridges form between Cys-3-Cys-24, Cys-17-Cys-42, Cys-46-Cys-59, and Cys-60-Cys-65.

As to expression, expressed by the venom gland.

It localises to the secreted. In terms of biological role, no toxicity is observed upon intravenous or intracerebroventricular injection into mice. Has no cytotoxic activity towards C2C12 cells at 100 ug/ml. This chain is Clarkitoxin-I-Mdum, found in Micrurus dumerilii (Coral snake).